Consider the following 497-residue polypeptide: Bifunctional protein GlmU (497 aa).

Residues 1–243 (MTSSTTSSTD…SALVAGVNDR (243 aa)) are pyrophosphorylase. UDP-N-acetyl-alpha-D-glucosamine contacts are provided by residues 16–19 (LAAG), lysine 30, glutamine 87, and 92–93 (GT). Residue aspartate 118 participates in Mg(2+) binding. Positions 153, 168, 183, and 241 each coordinate UDP-N-acetyl-alpha-D-glucosamine. Asparagine 241 serves as a coordination point for Mg(2+). Residues 244-264 (VQLAALGAELNRRIVTAHQRA) are linker. The interval 265–497 (GVTVIDPGST…LGHHDDSQGS (233 aa)) is N-acetyltransferase. Positions 346 and 364 each coordinate UDP-N-acetyl-alpha-D-glucosamine. Catalysis depends on histidine 376, which acts as the Proton acceptor. Residues tyrosine 379 and asparagine 390 each coordinate UDP-N-acetyl-alpha-D-glucosamine. Acetyl-CoA contacts are provided by residues alanine 393, 399-400 (NY), serine 418, and alanine 436. Positions 473-497 (ARAAERASGEAAEQALGHHDDSQGS) are disordered. Positions 488–497 (LGHHDDSQGS) are enriched in basic and acidic residues.

This sequence in the N-terminal section; belongs to the N-acetylglucosamine-1-phosphate uridyltransferase family. In the C-terminal section; belongs to the transferase hexapeptide repeat family. As to quaternary structure, homotrimer. Mg(2+) is required as a cofactor.

The protein resides in the cytoplasm. It carries out the reaction alpha-D-glucosamine 1-phosphate + acetyl-CoA = N-acetyl-alpha-D-glucosamine 1-phosphate + CoA + H(+). The enzyme catalyses N-acetyl-alpha-D-glucosamine 1-phosphate + UTP + H(+) = UDP-N-acetyl-alpha-D-glucosamine + diphosphate. It functions in the pathway nucleotide-sugar biosynthesis; UDP-N-acetyl-alpha-D-glucosamine biosynthesis; N-acetyl-alpha-D-glucosamine 1-phosphate from alpha-D-glucosamine 6-phosphate (route II): step 2/2. The protein operates within nucleotide-sugar biosynthesis; UDP-N-acetyl-alpha-D-glucosamine biosynthesis; UDP-N-acetyl-alpha-D-glucosamine from N-acetyl-alpha-D-glucosamine 1-phosphate: step 1/1. It participates in bacterial outer membrane biogenesis; LPS lipid A biosynthesis. In terms of biological role, catalyzes the last two sequential reactions in the de novo biosynthetic pathway for UDP-N-acetylglucosamine (UDP-GlcNAc). The C-terminal domain catalyzes the transfer of acetyl group from acetyl coenzyme A to glucosamine-1-phosphate (GlcN-1-P) to produce N-acetylglucosamine-1-phosphate (GlcNAc-1-P), which is converted into UDP-GlcNAc by the transfer of uridine 5-monophosphate (from uridine 5-triphosphate), a reaction catalyzed by the N-terminal domain. This Mycobacterium sp. (strain JLS) protein is Bifunctional protein GlmU.